A 354-amino-acid chain; its full sequence is 3-dehydroquinate synthase (354 aa).

NAD(+) contacts are provided by residues 66–71, 100–104, 124–125, Lys136, Lys145, and 163–166; these read SGETSK, GATGD, TT, and FLET. Zn(2+)-binding residues include Glu178, His242, and His256.

Belongs to the sugar phosphate cyclases superfamily. Dehydroquinate synthase family. It depends on NAD(+) as a cofactor. The cofactor is Co(2+). Requires Zn(2+) as cofactor.

Its subcellular location is the cytoplasm. The catalysed reaction is 7-phospho-2-dehydro-3-deoxy-D-arabino-heptonate = 3-dehydroquinate + phosphate. It participates in metabolic intermediate biosynthesis; chorismate biosynthesis; chorismate from D-erythrose 4-phosphate and phosphoenolpyruvate: step 2/7. Its function is as follows. Catalyzes the conversion of 3-deoxy-D-arabino-heptulosonate 7-phosphate (DAHP) to dehydroquinate (DHQ). The sequence is that of 3-dehydroquinate synthase from Staphylococcus epidermidis (strain ATCC 35984 / DSM 28319 / BCRC 17069 / CCUG 31568 / BM 3577 / RP62A).